The chain runs to 424 residues: 5-methylthioadenosine/S-adenosylhomocysteine deaminase (424 aa).

Positions 60 and 62 each coordinate Zn(2+). Positions 89 and 181 each coordinate substrate. Residue H208 coordinates Zn(2+). Residues E211 and D296 each coordinate substrate. D296 serves as a coordination point for Zn(2+).

The protein belongs to the metallo-dependent hydrolases superfamily. MTA/SAH deaminase family. Requires Zn(2+) as cofactor.

The enzyme catalyses S-adenosyl-L-homocysteine + H2O + H(+) = S-inosyl-L-homocysteine + NH4(+). It catalyses the reaction S-methyl-5'-thioadenosine + H2O + H(+) = S-methyl-5'-thioinosine + NH4(+). In terms of biological role, catalyzes the deamination of 5-methylthioadenosine and S-adenosyl-L-homocysteine into 5-methylthioinosine and S-inosyl-L-homocysteine, respectively. Is also able to deaminate adenosine. This Thermococcus sibiricus (strain DSM 12597 / MM 739) protein is 5-methylthioadenosine/S-adenosylhomocysteine deaminase.